The following is a 188-amino-acid chain: Methylamine dehydrogenase light chain (188 aa).

The segment at residues 1–57 (MLGNFRFDDMVEKLSRRVAGQTSRRSVIGKLGTAMLGIGLVPLLPVDRRGRVSRANA) is a signal peptide (tat-type signal). Cystine bridges form between Cys-80/Cys-145, Cys-86/Cys-118, Cys-93/Cys-178, Cys-95/Cys-143, Cys-103/Cys-134, and Cys-135/Cys-166. Trp-114 carries the tryptophylquinone modification. The segment at residues 114 to 165 (WVASCYNPTDGQSYLIAYRDCCGYNVSGRCPCLNTEGELPVYRPEFANDIIW) is a cross-link (tryptophan tryptophylquinone (Trp-Trp)).

It belongs to the aromatic amine dehydrogenase light chain family. In terms of assembly, heterotetramer of two light and two heavy chains. Requires tryptophan tryptophylquinone residue as cofactor. Predicted to be exported by the Tat system. The position of the signal peptide cleavage has not been experimentally proven. In terms of processing, tryptophan tryptophylquinone (TTQ) is formed by oxidation of the indole ring of a tryptophan to form tryptophylquinone followed by covalent cross-linking with another tryptophan residue.

It is found in the periplasm. The enzyme catalyses 2 oxidized [amicyanin] + methylamine + H2O = 2 reduced [amicyanin] + formaldehyde + NH4(+) + 2 H(+). It participates in one-carbon metabolism; methylamine degradation; formaldehyde from methylamine: step 1/1. In terms of biological role, methylamine dehydrogenase carries out the oxidation of methylamine. Electrons are passed from methylamine dehydrogenase to amicyanin. The protein is Methylamine dehydrogenase light chain (mauA) of Paracoccus denitrificans.